Here is a 221-residue protein sequence, read N- to C-terminus: MALPNQQTVDYPSFKLVIVGDGGTGKTTFVKRHLTGEFEKKYEPTIGVEVHPLDFFTNCGKIRFYCWDTAGQEKFGGLRDGYYIHGQCAIIMFDVTARLTYKNVPTWHRDLCRVCENIPIVLCGNKVDVKNRQVKAKQVTFHRKKNLQYYEISAKSNYNFEKPFLYLARKLAGDANLHFVESPALAPPEVQIDIALQQRHENEILEAANQPLPDDDDDAFE.

Residues 10–174 (DYPSFKLVIV…LYLARKLAGD (165 aa)) enclose the Small GTPase Ran-type domain. Residue 21–28 (DGGTGKTT) participates in GTP binding. A switch-I region spans residues 40–48 (KKYEPTIGV). Residues glycine 71, 125–128 (NKVD), and 153–155 (SAK) each bind GTP. The segment at 71 to 87 (GQEKFGGLRDGYYIHGQ) is switch-II.

Belongs to the small GTPase superfamily. Ran family. As to quaternary structure, found in a nuclear export complex with RanGTP, exportin and pre-miRNA.

The protein localises to the nucleus. Its function is as follows. GTP-binding protein involved in nucleocytoplasmic transport. Required for the import of protein into the nucleus and also for RNA export. Involved in chromatin condensation and control of cell cycle. This chain is GTP-binding nuclear protein Ran/TC4, found in Vicia faba (Broad bean).